Consider the following 328-residue polypeptide: Tetraacyldisaccharide 4'-kinase (328 aa).

55–62 (TAGGNGKT) serves as a coordination point for ATP.

It belongs to the LpxK family.

It carries out the reaction a lipid A disaccharide + ATP = a lipid IVA + ADP + H(+). Its pathway is glycolipid biosynthesis; lipid IV(A) biosynthesis; lipid IV(A) from (3R)-3-hydroxytetradecanoyl-[acyl-carrier-protein] and UDP-N-acetyl-alpha-D-glucosamine: step 6/6. Its function is as follows. Transfers the gamma-phosphate of ATP to the 4'-position of a tetraacyldisaccharide 1-phosphate intermediate (termed DS-1-P) to form tetraacyldisaccharide 1,4'-bis-phosphate (lipid IVA). The chain is Tetraacyldisaccharide 4'-kinase from Escherichia coli O45:K1 (strain S88 / ExPEC).